The sequence spans 108 residues: Cytochrome c-555 (108 aa).

The signal sequence occupies residues 1–22 (MSRFVSAALVGAALLVSGNAFA). Heme c-binding residues include Cys-36, Cys-39, His-40, and Met-82.

In terms of processing, binds 1 heme c group covalently per subunit.

Functionally, this basic c-type monoheme cytochrome has been found exclusively in the green photosynthetic bacteria, although its role in bacterial photosynthesis is not established. It has an unusually low redox potential compared with mitochondrial cytochrome c. It is reactive with cytochrome c oxidases but not with reductases. In Chlorobaculum tepidum (strain ATCC 49652 / DSM 12025 / NBRC 103806 / TLS) (Chlorobium tepidum), this protein is Cytochrome c-555.